A 363-amino-acid chain; its full sequence is Fructose-1,6-bisphosphate aldolase/phosphatase (363 aa).

Residue Asp11 is the Proton acceptor; for FBP phosphatase activity of the active site. The Mg(2+) site is built by Asp11, His18, Asp51, and Asp52. His18 is a beta-D-fructose 1,6-bisphosphate binding site. Residue His18 coordinates dihydroxyacetone phosphate. Tyr89 contributes to the beta-D-fructose 1,6-bisphosphate binding site. Residue Gln93 coordinates Mg(2+). Residue 102-103 (GN) coordinates beta-D-fructose 1,6-bisphosphate. Asp130 contributes to the Mg(2+) binding site. Beta-D-fructose 1,6-bisphosphate is bound at residue Lys131. Lys131 lines the dihydroxyacetone phosphate pocket. Tyr230 functions as the Proton donor/acceptor; for FBP aldolase activity in the catalytic mechanism. Mg(2+)-binding residues include Lys233, Asp234, and Asp235. The active-site Schiff-base intermediate with DHAP; for FBP aldolase activity is Lys233. Beta-D-fructose 1,6-bisphosphate-binding positions include 243-244 (QK), Arg267, and Tyr348. Arg267 lines the dihydroxyacetone phosphate pocket.

It belongs to the FBP aldolase/phosphatase family. In terms of assembly, homooctamer; dimer of tetramers. It depends on Mg(2+) as a cofactor.

The enzyme catalyses beta-D-fructose 1,6-bisphosphate + H2O = beta-D-fructose 6-phosphate + phosphate. It carries out the reaction beta-D-fructose 1,6-bisphosphate = D-glyceraldehyde 3-phosphate + dihydroxyacetone phosphate. It participates in carbohydrate biosynthesis; gluconeogenesis. Catalyzes two subsequent steps in gluconeogenesis: the aldol condensation of dihydroxyacetone phosphate (DHAP) and glyceraldehyde-3-phosphate (GA3P) to fructose-1,6-bisphosphate (FBP), and the dephosphorylation of FBP to fructose-6-phosphate (F6P). This chain is Fructose-1,6-bisphosphate aldolase/phosphatase, found in Thermus thermophilus (strain ATCC BAA-163 / DSM 7039 / HB27).